We begin with the raw amino-acid sequence, 55 residues long: Large ribosomal subunit protein bL33 (55 aa).

Belongs to the bacterial ribosomal protein bL33 family.

This chain is Large ribosomal subunit protein bL33, found in Methylocella silvestris (strain DSM 15510 / CIP 108128 / LMG 27833 / NCIMB 13906 / BL2).